We begin with the raw amino-acid sequence, 355 residues long: Homoserine O-succinyltransferase (355 aa).

Catalysis depends on Cys146, which acts as the Acyl-thioester intermediate. Substrate-binding residues include Lys167 and Ser196. His239 serves as the catalytic Proton acceptor. Glu241 is a catalytic residue. Substrate is bound at residue Arg253.

Belongs to the MetA family.

It is found in the cytoplasm. It catalyses the reaction L-homoserine + succinyl-CoA = O-succinyl-L-homoserine + CoA. It functions in the pathway amino-acid biosynthesis; L-methionine biosynthesis via de novo pathway; O-succinyl-L-homoserine from L-homoserine: step 1/1. In terms of biological role, transfers a succinyl group from succinyl-CoA to L-homoserine, forming succinyl-L-homoserine. The sequence is that of Homoserine O-succinyltransferase from Methylococcus capsulatus (strain ATCC 33009 / NCIMB 11132 / Bath).